A 553-amino-acid chain; its full sequence is Zinc finger protein 426 (553 aa).

Residues 40-111 (VSFDDVIVDF…KIVFPEWKIQ (72 aa)) enclose the KRAB domain. C2H2-type zinc fingers lie at residues 222–244 (FECS…QRTH), 277–299 (HRCK…MRTH), 305–327 (YECK…GRTH), 333–355 (YVCN…VRSH), 361–383 (YACK…IRTH), 389–411 (FVCV…LKMH), 417–439 (CECK…MRTH), 445–467 (YTCK…MRIH), 473–495 (YECK…ERTH), 501–525 (YECK…SHTH), and 531–553 (YKCQ…ERIH).

The protein resides in the nucleus. In terms of biological role, may be involved in transcriptional regulation. This is Zinc finger protein 426 (Znf426) from Rattus norvegicus (Rat).